We begin with the raw amino-acid sequence, 207 residues long: Reticulon-1-A (207 aa).

One can recognise a Reticulon domain in the interval 21–207; that stretch reads AIDLLYWRDI…AKIPGTKQKE (187 aa). The next 2 membrane-spanning stretches (helical) occupy residues 35–55 and 139–159; these read IVFG…VVSV and VLMW…LLIM.

In terms of tissue distribution, expressed in the animal hemisphere (presumptive neural ectoderm) of blastula and gastrula stage embryos, and along the anterior neural border, in the panplacodal primordium, and in the dorsolateral side of archenteron roof of late neurula embryos. At the tailbud stage, expression localizes to the central nervous system, including the spinal cord, prosencephalon, mesencephalon and rhombencephalon, as well as the lateral line placode, otic vesicle and pronephros.

Its subcellular location is the endoplasmic reticulum membrane. The protein localises to the nucleus. Functionally, inhibits amyloid precursor protein processing, probably by blocking BACE1 activity. In Xenopus laevis (African clawed frog), this protein is Reticulon-1-A (rtn1-a).